We begin with the raw amino-acid sequence, 398 residues long: Phosphoglycerate kinase (398 aa).

Residues 23–25 (DFN), arginine 38, 61–64 (HLGK), arginine 122, and arginine 155 contribute to the substrate site. ATP contacts are provided by residues lysine 206, glycine 297, glutamate 328, and 354-357 (GGDS).

This sequence belongs to the phosphoglycerate kinase family. In terms of assembly, monomer.

It localises to the cytoplasm. The enzyme catalyses (2R)-3-phosphoglycerate + ATP = (2R)-3-phospho-glyceroyl phosphate + ADP. The protein operates within carbohydrate degradation; glycolysis; pyruvate from D-glyceraldehyde 3-phosphate: step 2/5. The polypeptide is Phosphoglycerate kinase (Clostridium kluyveri (strain NBRC 12016)).